A 631-amino-acid chain; its full sequence is Nucleoside triphosphatase I (631 aa).

Residues 42-204 enclose the Helicase ATP-binding domain; it reads FLGLDSMHSL…TMLVNLLRPG (163 aa). Residue 55–62 participates in ATP binding; it reads HETGVGKT. The short motif at 141–144 is the DEXH box element; sequence DECH. The region spanning 367–532 is the Helicase C-terminal domain; the sequence is KFIDVCLGIL…EFVQLFRVFK (166 aa). Residues 457–524 form a binding to the cap-specific mRNA (nucleoside-2'-O-)-methyltransferase region; sequence DIFILDMTWN…EIIQSKSKEF (68 aa).

This sequence belongs to the helicase family. NPH I subfamily. Monomer. Interacts (via C-terminus) with RAP94/OPG109 (via N-terminus). Interacts with the cap-specific mRNA (nucleoside-2'-O-)-methyltransferase OPG102.

Its subcellular location is the virion. The catalysed reaction is a ribonucleoside 5'-triphosphate + H2O = a ribonucleoside 5'-diphosphate + phosphate + H(+). DNA-dependent ATPase that acts as a 5' to 3' translocase on single-stranded DNA and thereby plays a role in transcription termination of viral early genes. Uses forward translocation in concert with the viral RNA polymerase RAP94/OPG109 subunit and the capping enzyme/VTF to catalyze release of UUUUUNU-containing nascent RNA from the elongation complex. In addition, acts as a positive elongation factor to assist transcription through problematic sequences. The sequence is that of Nucleoside triphosphatase I (OPG123) from Vaccinia virus (strain Copenhagen) (VACV).